We begin with the raw amino-acid sequence, 953 residues long: Protein translocase subunit SecA 1 (953 aa).

ATP-binding positions include Gln-83, 101–105 (GEGKT), and Asp-490. The span at 854 to 867 (AAAAAAKASDSAAK) shows a compositional bias: low complexity. The tract at residues 854–953 (AAAAAAKASD…DRPAKSHRKG (100 aa)) is disordered. Positions 929–947 (SRRERREAARKQAKADRPA) are enriched in basic and acidic residues.

It belongs to the SecA family. As to quaternary structure, monomer and homodimer. Part of the essential Sec protein translocation apparatus which comprises SecA, SecYEG and auxiliary proteins SecDF. Other proteins may also be involved.

It localises to the cell membrane. Its subcellular location is the cytoplasm. The enzyme catalyses ATP + H2O + cellular proteinSide 1 = ADP + phosphate + cellular proteinSide 2.. Part of the Sec protein translocase complex. Interacts with the SecYEG preprotein conducting channel. Has a central role in coupling the hydrolysis of ATP to the transfer of proteins into and across the cell membrane, serving as an ATP-driven molecular motor driving the stepwise translocation of polypeptide chains across the membrane. The chain is Protein translocase subunit SecA 1 from Mycolicibacterium smegmatis (strain ATCC 700084 / mc(2)155) (Mycobacterium smegmatis).